A 213-amino-acid polypeptide reads, in one-letter code: Pyridoxine/pyridoxamine 5'-phosphate oxidase (213 aa).

Substrate-binding positions include 8 to 11 and lysine 66; that span reads RQEY. FMN-binding positions include 61–66, 76–77, arginine 82, lysine 83, and glutamine 105; these read RTVLLK and YT. Residues tyrosine 123, arginine 127, and serine 131 each coordinate substrate. Residues 140 to 141 and tryptophan 185 contribute to the FMN site; that span reads QS. A substrate-binding site is contributed by 191-193; the sequence is RLH. Arginine 195 contacts FMN.

This sequence belongs to the pyridoxamine 5'-phosphate oxidase family. Homodimer. Requires FMN as cofactor.

It catalyses the reaction pyridoxamine 5'-phosphate + O2 + H2O = pyridoxal 5'-phosphate + H2O2 + NH4(+). It carries out the reaction pyridoxine 5'-phosphate + O2 = pyridoxal 5'-phosphate + H2O2. Its pathway is cofactor metabolism; pyridoxal 5'-phosphate salvage; pyridoxal 5'-phosphate from pyridoxamine 5'-phosphate: step 1/1. It participates in cofactor metabolism; pyridoxal 5'-phosphate salvage; pyridoxal 5'-phosphate from pyridoxine 5'-phosphate: step 1/1. Its function is as follows. Catalyzes the oxidation of either pyridoxine 5'-phosphate (PNP) or pyridoxamine 5'-phosphate (PMP) into pyridoxal 5'-phosphate (PLP). This is Pyridoxine/pyridoxamine 5'-phosphate oxidase from Bacteroides thetaiotaomicron (strain ATCC 29148 / DSM 2079 / JCM 5827 / CCUG 10774 / NCTC 10582 / VPI-5482 / E50).